The following is a 447-amino-acid chain: Cysteine--tRNA ligase (447 aa).

Cys28 provides a ligand contact to Zn(2+). Residues 30 to 40 carry the 'HIGH' region motif; sequence PTVYNYIHVGN. Zn(2+) is bound by residues Cys211, His236, and Glu240. Positions 268–272 match the 'KMSKS' region motif; it reads KMSKS. Residue Lys271 coordinates ATP.

It belongs to the class-I aminoacyl-tRNA synthetase family. Monomer. The cofactor is Zn(2+).

The protein localises to the cytoplasm. The enzyme catalyses tRNA(Cys) + L-cysteine + ATP = L-cysteinyl-tRNA(Cys) + AMP + diphosphate. This chain is Cysteine--tRNA ligase, found in Streptococcus pneumoniae serotype 4 (strain ATCC BAA-334 / TIGR4).